The sequence spans 78 residues: Small integral membrane protein 5 (78 aa).

A helical membrane pass occupies residues 32-52 (ILAFSVLVVFTATVVLLLLIA).

The protein localises to the membrane. The protein is Small integral membrane protein 5 (SMIM5) of Bos taurus (Bovine).